A 616-amino-acid polypeptide reads, in one-letter code: Chaperone protein HscA homolog (616 aa).

The protein belongs to the heat shock protein 70 family.

In terms of biological role, probable chaperone. Has a low intrinsic ATPase activity which is markedly stimulated by HscB. The sequence is that of Chaperone protein HscA homolog from Vibrio cholerae serotype O1 (strain ATCC 39315 / El Tor Inaba N16961).